Here is a 1199-residue protein sequence, read N- to C-terminus: Metabotropic glutamate receptor 1 (1199 aa).

The N-terminal stretch at 1 to 18 is a signal peptide; that stretch reads MVRLLLIFFPMIFLEMSI. Over 19–592 the chain is Extracellular; the sequence is LPRMPDRKVL…VRYLEWSDIE (574 aa). Cysteines 67 and 109 form a disulfide. Tyrosine 74 contributes to the L-glutamate binding site. Asparagine 98 is a glycosylation site (N-linked (GlcNAc...) asparagine). Residues serine 165 and 186 to 188 each bind L-glutamate; that span reads SAT. N-linked (GlcNAc...) asparagine glycosylation is present at asparagine 223. An L-glutamate-binding site is contributed by tyrosine 236. Cysteines 289 and 291 form a disulfide. Aspartate 318 contributes to the L-glutamate binding site. Cysteine 378 and cysteine 394 are oxidised to a cystine. The N-linked (GlcNAc...) asparagine glycan is linked to asparagine 397. Residue lysine 409 participates in L-glutamate binding. Residues cysteine 432 and cysteine 439 are joined by a disulfide bond. Asparagine 515 carries an N-linked (GlcNAc...) asparagine glycan. The helical transmembrane segment at 593–615 threads the bilayer; sequence SIIAIAFSCLGILVTLFVTLIFV. Residues 616–629 are Cytoplasmic-facing; it reads LYRDTPVVKSSSRE. The helical transmembrane segment at 630–650 threads the bilayer; that stretch reads LCYIILAGIFLGYVCPFTLIA. Residues 651-658 lie on the Extracellular side of the membrane; it reads KPTTTSCY. Residues cysteine 657 and cysteine 746 are joined by a disulfide bond. The chain crosses the membrane as a helical span at residues 659–680; the sequence is LQRLLVGLSSAMCYSALVTKTN. Residues 681-703 lie on the Cytoplasmic side of the membrane; that stretch reads RIARILAGSKKKICTRKPRFMSA. The chain crosses the membrane as a helical span at residues 704-727; it reads WAQVIIASILISVQLTLVVTLIIM. At 728 to 750 the chain is on the extracellular side; that stretch reads EPPMPILSYPSIKEVYLICNTSN. The chain crosses the membrane as a helical span at residues 751-772; the sequence is LGVVAPVGYNGLLIMSCTYYAF. At 773 to 785 the chain is on the cytoplasmic side; it reads KTRNVPANFNEAK. Residues 786-807 form a helical membrane-spanning segment; sequence YIAFTMYTTCIIWLAFVPIYFG. The Extracellular segment spans residues 808–815; it reads SNYKIITT. The helical transmembrane segment at 816-840 threads the bilayer; the sequence is CFAVSLSVTVALGCMFTPKMYIIIA. At 841 to 1199 the chain is on the cytoplasmic side; it reads KPERNVRSAF…RDYKQSSSTL (359 aa). Serine 853 is subject to Phosphoserine. Threonine 871 carries the post-translational modification Phosphothreonine. 3 disordered regions span residues 882–905, 959–1036, and 1056–1081; these read GAGN…QAPK, EEDN…QPKS, and HAVL…PPQH. Residues 885–895 show a composition bias toward polar residues; that stretch reads NANSNGKSVSW. A phosphoserine mark is found at serine 894 and serine 969. Over residues 1012-1033 the composition is skewed to pro residues; the sequence is GLPPPLPQQQPQQPPPQQPPQQ. Serine 1098 carries the post-translational modification Phosphoserine. Positions 1120–1177 are disordered; sequence EREGNTEEDELEEEEDLPTASKLTPEDSPALTPPSPFRDSVASGSSVPSSPVSESVLC. Residues 1125–1136 are compositionally biased toward acidic residues; it reads TEEDELEEEEDL. Serine 1147 is modified (phosphoserine). Threonine 1151 bears the Phosphothreonine mark. At serine 1154 the chain carries Phosphoserine. Over residues 1159–1175 the composition is skewed to low complexity; sequence SVASGSSVPSSPVSESV.

The protein belongs to the G-protein coupled receptor 3 family. In terms of assembly, homodimer; disulfide-linked. The PPXXF motif binds HOMER1, HOMER2 and HOMER3. Interacts with TAMALIN. Interacts with RYR1, RYR2, ITPR1, SHANK1 and SHANK3. Interacts with SIAH1. As to expression, predominantly expressed in cerebellar Purkinje cells, CA2-CA3 pyramidal cells of the hippocampus, and mitral and tufted cells of the olfactory bulb.

The protein resides in the cell membrane. It localises to the postsynaptic cell membrane. It is found in the cell projection. Its subcellular location is the dendrite. G-protein coupled receptor for glutamate. Ligand binding causes a conformation change that triggers signaling via guanine nucleotide-binding proteins (G proteins) and modulates the activity of down-stream effectors. Signaling activates a phosphatidylinositol-calcium second messenger system. May participate in the central action of glutamate in the CNS, such as long-term potentiation in the hippocampus and long-term depression in the cerebellum. May function in the light response in the retina. Induces GRID1 and GRID2 cation-channel activation via GNAQ-PLC-PKC pathway in dopaminergic neurons and cerebellar Purkinje cell, respectively. The protein is Metabotropic glutamate receptor 1 (Grm1) of Rattus norvegicus (Rat).